We begin with the raw amino-acid sequence, 267 residues long: Putative carboxymethylenebutenolidase (267 aa).

Catalysis depends on residues Cys-137, Asp-194, and His-226.

Belongs to the dienelactone hydrolase family.

It catalyses the reaction 2-(5-oxo-2,5-dihydrofuran-2-ylidene)acetate + H2O = 4-oxohex-2-enedioate + H(+). The protein is Putative carboxymethylenebutenolidase of Yersinia pestis.